Reading from the N-terminus, the 132-residue chain is MKTLFLAIALFSAVALAEEKSESAELVPGGEAFVVESVNYPEDASANLKQTWKLTTTAGNFIHLECTDIRLFEDKPCGDWALTFDDGGNVTEMCTTSFDHKFTSKTNTLTLTLRTGRDARGFVACKATATKK.

A signal peptide spans 1–17; it reads MKTLFLAIALFSAVALA. Positions 22–129 constitute a CUB domain; that stretch reads ESAELVPGGE…RGFVACKATA (108 aa). Intrachain disulfides connect cysteine 66/cysteine 125 and cysteine 77/cysteine 94.

This sequence belongs to the venom CUB family. As to expression, expressed by the venom gland (posterior main gland) (at protein level).

It is found in the secreted. This chain is Venom CUB domain-containing protein 2, found in Platymeris rhadamanthus (Red spot assassin bug).